The primary structure comprises 105 residues: Large ribosomal subunit protein bL21 (105 aa).

This sequence belongs to the bacterial ribosomal protein bL21 family. In terms of assembly, part of the 50S ribosomal subunit. Contacts protein L20.

This protein binds to 23S rRNA in the presence of protein L20. In Natranaerobius thermophilus (strain ATCC BAA-1301 / DSM 18059 / JW/NM-WN-LF), this protein is Large ribosomal subunit protein bL21.